A 305-amino-acid polypeptide reads, in one-letter code: Tyrosine recombinase XerC (305 aa).

Residues 1–93 enclose the Core-binding (CB) domain; that stretch reads MVLDGFAAYF…AWRQYCAWLV (93 aa). Residues 114–294 enclose the Tyr recombinase domain; the sequence is RVPKALPQEW…DFDHIARLYD (181 aa). Catalysis depends on residues arginine 155, lysine 179, histidine 246, arginine 249, and histidine 272. The active-site O-(3'-phospho-DNA)-tyrosine intermediate is tyrosine 281.

Belongs to the 'phage' integrase family. XerC subfamily. In terms of assembly, forms a cyclic heterotetrameric complex composed of two molecules of XerC and two molecules of XerD.

The protein resides in the cytoplasm. Site-specific tyrosine recombinase, which acts by catalyzing the cutting and rejoining of the recombining DNA molecules. The XerC-XerD complex is essential to convert dimers of the bacterial chromosome into monomers to permit their segregation at cell division. It also contributes to the segregational stability of plasmids. In Neisseria gonorrhoeae (strain ATCC 700825 / FA 1090), this protein is Tyrosine recombinase XerC.